A 308-amino-acid chain; its full sequence is Pantothenate kinase (308 aa).

93–100 lines the ATP pocket; the sequence is GSVAVGKS.

It belongs to the prokaryotic pantothenate kinase family.

It is found in the cytoplasm. It catalyses the reaction (R)-pantothenate + ATP = (R)-4'-phosphopantothenate + ADP + H(+). It participates in cofactor biosynthesis; coenzyme A biosynthesis; CoA from (R)-pantothenate: step 1/5. The polypeptide is Pantothenate kinase (Corynebacterium aurimucosum (strain ATCC 700975 / DSM 44827 / CIP 107346 / CN-1) (Corynebacterium nigricans)).